The sequence spans 435 residues: tRNA modification GTPase MnmE (435 aa).

(6S)-5-formyl-5,6,7,8-tetrahydrofolate contacts are provided by R24, E82, and K122. The TrmE-type G domain occupies 219–360 (GFIIAIAGPP…LIAEMERRLG (142 aa)). N229 provides a ligand contact to K(+). Residues 229-234 (NAGKST), 248-254 (SPVPGTT), and 273-276 (DTAG) contribute to the GTP site. Mg(2+) is bound at residue S233. K(+) contacts are provided by S248, V250, and T253. T254 contributes to the Mg(2+) binding site. K435 is a (6S)-5-formyl-5,6,7,8-tetrahydrofolate binding site.

Belongs to the TRAFAC class TrmE-Era-EngA-EngB-Septin-like GTPase superfamily. TrmE GTPase family. Homodimer. Heterotetramer of two MnmE and two MnmG subunits. The cofactor is K(+).

It localises to the cytoplasm. Functionally, exhibits a very high intrinsic GTPase hydrolysis rate. Involved in the addition of a carboxymethylaminomethyl (cmnm) group at the wobble position (U34) of certain tRNAs, forming tRNA-cmnm(5)s(2)U34. This Azorhizobium caulinodans (strain ATCC 43989 / DSM 5975 / JCM 20966 / LMG 6465 / NBRC 14845 / NCIMB 13405 / ORS 571) protein is tRNA modification GTPase MnmE.